The sequence spans 287 residues: Urease accessory protein UreD (287 aa).

This sequence belongs to the UreD family. In terms of assembly, ureD, UreF and UreG form a complex that acts as a GTP-hydrolysis-dependent molecular chaperone, activating the urease apoprotein by helping to assemble the nickel containing metallocenter of UreC. The UreE protein probably delivers the nickel.

The protein resides in the cytoplasm. Functionally, required for maturation of urease via the functional incorporation of the urease nickel metallocenter. This chain is Urease accessory protein UreD, found in Herpetosiphon aurantiacus (strain ATCC 23779 / DSM 785 / 114-95).